The following is a 649-amino-acid chain: Protein teflon (649 aa).

The C2H2-type 1 zinc finger occupies 33-56 (LYCHFCRDLFTQLPEFLRHLQSNH). Residues 78-126 (EQGKAHEDAQSAGHNSSSGDSSSLMNSEDSRAIEGSEDNSDNSPMKPEQ) are disordered. A compositionally biased stretch (low complexity) spans 88–104 (SAGHNSSSGDSSSLMNS). 2 C2H2-type zinc fingers span residues 599-621 (YFCK…LISH) and 625-648 (FQCT…RNAH).

Belongs to the Teflon family. In terms of tissue distribution, expressed at a low level in a variety of tissues, highest expression is in testis.

Its subcellular location is the nucleus. The protein resides in the chromosome. Its function is as follows. Specifically required in males for proper segregation of autosomal bivalents at meiosis I. Expression is required in the male germ line prior to spermatocyte stage S4. May have a role as a bridging molecule maintaining adhesion to hold autosome bivalents together via heterochromatic connections. The chain is Protein teflon from Drosophila melanogaster (Fruit fly).